A 505-amino-acid chain; its full sequence is Flagellin (505 aa).

The protein belongs to the bacterial flagellin family.

It is found in the secreted. It localises to the bacterial flagellum. Flagellin is the subunit protein which polymerizes to form the filaments of bacterial flagella. This is Flagellin (fliC) from Salmonella montevideo.